A 27-amino-acid polypeptide reads, in one-letter code: Peptide Cn29 (27 aa).

Disulfide bonds link C2–C23, C5–C18, and C12–C25.

Expressed by the venom gland.

The protein resides in the secreted. This is Peptide Cn29 from Centruroides noxius (Mexican scorpion).